Consider the following 166-residue polypeptide: PTS system glucose-specific EIIA component (166 aa).

Residues 34–138 (DPVFAQKMMG…SVISPIIITN (105 aa)) enclose the PTS EIIA type-1 domain. His71 and His86 together coordinate Zn(2+). Catalysis depends on His86, which acts as the Tele-phosphohistidine intermediate; for EIIA activity. Phosphohistidine; by HPr is present on His86.

In terms of assembly, heterodimer with glycerol kinase (glpk). It depends on Zn(2+) as a cofactor.

It is found in the cytoplasm. Its function is as follows. The phosphoenolpyruvate-dependent sugar phosphotransferase system (sugar PTS), a major carbohydrate active transport system, catalyzes the phosphorylation of incoming sugar substrates concomitantly with their translocation across the cell membrane. The enzyme II complex composed of PtsG and Crr is involved in glucose transport. The chain is PTS system glucose-specific EIIA component (crr) from Staphylococcus aureus (strain Mu50 / ATCC 700699).